Here is a 1175-residue protein sequence, read N- to C-terminus: Phospholipid-transporting ATPase IF (1175 aa).

Transmembrane regions (helical) follow at residues 69 to 89, 91 to 111, 287 to 307, and 338 to 358; these read FYFL…SPIT, GLPL…EDWL, NTFL…STIL, and FISD…ISLY. D407 acts as the 4-aspartylphosphate intermediate in catalysis. 12 residues coordinate ATP: D407, K408, T409, E530, F571, K594, R625, T705, G706, D707, R793, and K799. D407 serves as a coordination point for Mg(2+). T409 serves as a coordination point for Mg(2+). Residue D820 coordinates Mg(2+). Positions 823 and 824 each coordinate ATP. D824 is a Mg(2+) binding site. The next 6 membrane-spanning stretches (helical) occupy residues 862–882, 910–930, 963–983, 994–1014, 1033–1053, and 1060–1080; these read LLFV…QYFF, VYLT…YSLV, WTVL…FLVG, MFGN…TVTV, GSII…WPFL, and FVFI…LMVV.

This sequence belongs to the cation transport ATPase (P-type) (TC 3.A.3) family. Type IV subfamily. In terms of assembly, component of a P4-ATPase flippase complex which consists of a catalytic alpha subunit ATP11B and an accessory beta subunit TMEM30A. Mg(2+) serves as cofactor. In terms of tissue distribution, expressed in retina, brain, liver, testes and kidney (at protein level).

It localises to the recycling endosome membrane. The protein localises to the early endosome. Its subcellular location is the endoplasmic reticulum. It is found in the golgi apparatus. The protein resides in the trans-Golgi network. It carries out the reaction ATP + H2O + phospholipidSide 1 = ADP + phosphate + phospholipidSide 2.. It catalyses the reaction a 1,2-diacyl-sn-glycero-3-phospho-L-serine(out) + ATP + H2O = a 1,2-diacyl-sn-glycero-3-phospho-L-serine(in) + ADP + phosphate + H(+). The catalysed reaction is a 1,2-diacyl-sn-glycero-3-phosphoethanolamine(out) + ATP + H2O = a 1,2-diacyl-sn-glycero-3-phosphoethanolamine(in) + ADP + phosphate + H(+). Functionally, catalytic component of a P4-ATPase flippase complex which catalyzes the hydrolysis of ATP coupled to the transport of aminophospholipids, phosphatidylserines (PS) and phosphatidylethanolamines (PE), from the outer to the inner leaflet of intracellular membranes. May contribute to the maintenance of membrane lipid asymmetry in endosome compartment. This is Phospholipid-transporting ATPase IF from Mus musculus (Mouse).